A 92-amino-acid polypeptide reads, in one-letter code: Small ribosomal subunit protein uS19 (92 aa).

This sequence belongs to the universal ribosomal protein uS19 family.

Functionally, protein S19 forms a complex with S13 that binds strongly to the 16S ribosomal RNA. The chain is Small ribosomal subunit protein uS19 from Lachnoclostridium phytofermentans (strain ATCC 700394 / DSM 18823 / ISDg) (Clostridium phytofermentans).